The primary structure comprises 251 residues: 3-deoxy-manno-octulosonate cytidylyltransferase (251 aa).

It belongs to the KdsB family.

It localises to the cytoplasm. It catalyses the reaction 3-deoxy-alpha-D-manno-oct-2-ulosonate + CTP = CMP-3-deoxy-beta-D-manno-octulosonate + diphosphate. It participates in nucleotide-sugar biosynthesis; CMP-3-deoxy-D-manno-octulosonate biosynthesis; CMP-3-deoxy-D-manno-octulosonate from 3-deoxy-D-manno-octulosonate and CTP: step 1/1. It functions in the pathway bacterial outer membrane biogenesis; lipopolysaccharide biosynthesis. Its function is as follows. Activates KDO (a required 8-carbon sugar) for incorporation into bacterial lipopolysaccharide in Gram-negative bacteria. The sequence is that of 3-deoxy-manno-octulosonate cytidylyltransferase from Parabacteroides distasonis (strain ATCC 8503 / DSM 20701 / CIP 104284 / JCM 5825 / NCTC 11152).